The following is a 225-amino-acid chain: ATP-dependent Clp protease proteolytic subunit (225 aa).

Ser123 acts as the Nucleophile in catalysis. His148 is an active-site residue.

It belongs to the peptidase S14 family. In terms of assembly, fourteen ClpP subunits assemble into 2 heptameric rings which stack back to back to give a disk-like structure with a central cavity, resembling the structure of eukaryotic proteasomes.

The protein localises to the cytoplasm. The enzyme catalyses Hydrolysis of proteins to small peptides in the presence of ATP and magnesium. alpha-casein is the usual test substrate. In the absence of ATP, only oligopeptides shorter than five residues are hydrolyzed (such as succinyl-Leu-Tyr-|-NHMec, and Leu-Tyr-Leu-|-Tyr-Trp, in which cleavage of the -Tyr-|-Leu- and -Tyr-|-Trp bonds also occurs).. In terms of biological role, cleaves peptides in various proteins in a process that requires ATP hydrolysis. Has a chymotrypsin-like activity. Plays a major role in the degradation of misfolded proteins. This is ATP-dependent Clp protease proteolytic subunit from Chlorobaculum tepidum (strain ATCC 49652 / DSM 12025 / NBRC 103806 / TLS) (Chlorobium tepidum).